Here is a 368-residue protein sequence, read N- to C-terminus: 1-deoxy-D-xylulose 5-phosphate reductoisomerase (368 aa).

Thr-7, Gly-8, Ser-9, Ile-10, Gly-31, Lys-32, Asn-33, and Asn-113 together coordinate NADPH. Lys-114 serves as a coordination point for 1-deoxy-D-xylulose 5-phosphate. NADPH is bound at residue Glu-115. Residue Asp-133 participates in Mn(2+) binding. Ser-134, Glu-135, Ser-158, and His-181 together coordinate 1-deoxy-D-xylulose 5-phosphate. Glu-135 contributes to the Mn(2+) binding site. Residue Gly-187 coordinates NADPH. Residues Ser-194, Asn-199, Lys-200, and Glu-203 each coordinate 1-deoxy-D-xylulose 5-phosphate. Residue Glu-203 coordinates Mn(2+).

This sequence belongs to the DXR family. Requires Mg(2+) as cofactor. Mn(2+) is required as a cofactor.

The catalysed reaction is 2-C-methyl-D-erythritol 4-phosphate + NADP(+) = 1-deoxy-D-xylulose 5-phosphate + NADPH + H(+). The protein operates within isoprenoid biosynthesis; isopentenyl diphosphate biosynthesis via DXP pathway; isopentenyl diphosphate from 1-deoxy-D-xylulose 5-phosphate: step 1/6. Catalyzes the NADPH-dependent rearrangement and reduction of 1-deoxy-D-xylulose-5-phosphate (DXP) to 2-C-methyl-D-erythritol 4-phosphate (MEP). The sequence is that of 1-deoxy-D-xylulose 5-phosphate reductoisomerase from Helicobacter pylori (strain HPAG1).